The following is a 130-amino-acid chain: Protein ApaG (130 aa).

One can recognise an ApaG domain in the interval Ser3–Pro127.

The chain is Protein ApaG from Paramagnetospirillum magneticum (strain ATCC 700264 / AMB-1) (Magnetospirillum magneticum).